A 468-amino-acid chain; its full sequence is 3-isopropylmalate dehydratase large subunit (468 aa).

Residues Cys345, Cys405, and Cys408 each contribute to the [4Fe-4S] cluster site.

Belongs to the aconitase/IPM isomerase family. LeuC type 1 subfamily. Heterodimer of LeuC and LeuD. It depends on [4Fe-4S] cluster as a cofactor.

The catalysed reaction is (2R,3S)-3-isopropylmalate = (2S)-2-isopropylmalate. The protein operates within amino-acid biosynthesis; L-leucine biosynthesis; L-leucine from 3-methyl-2-oxobutanoate: step 2/4. Functionally, catalyzes the isomerization between 2-isopropylmalate and 3-isopropylmalate, via the formation of 2-isopropylmaleate. The polypeptide is 3-isopropylmalate dehydratase large subunit (Oceanobacillus iheyensis (strain DSM 14371 / CIP 107618 / JCM 11309 / KCTC 3954 / HTE831)).